The following is a 118-amino-acid chain: Large ribosomal subunit protein bL20 (118 aa).

Belongs to the bacterial ribosomal protein bL20 family.

In terms of biological role, binds directly to 23S ribosomal RNA and is necessary for the in vitro assembly process of the 50S ribosomal subunit. It is not involved in the protein synthesizing functions of that subunit. The protein is Large ribosomal subunit protein bL20 of Desulforamulus reducens (strain ATCC BAA-1160 / DSM 100696 / MI-1) (Desulfotomaculum reducens).